A 251-amino-acid chain; its full sequence is Probable transcriptional regulatory protein MSMEG_2940/MSMEI_2866 (251 aa).

The protein belongs to the TACO1 family.

It is found in the cytoplasm. This is Probable transcriptional regulatory protein MSMEG_2940/MSMEI_2866 from Mycolicibacterium smegmatis (strain ATCC 700084 / mc(2)155) (Mycobacterium smegmatis).